The sequence spans 147 residues: Hemoglobin subunit gamma-1 (147 aa).

In terms of domain architecture, Globin spans Asn-3–His-147. Thr-13 carries the post-translational modification Phosphothreonine. Residues Ser-45, Ser-51, and Ser-53 each carry the phosphoserine modification. Lys-60 is modified (N6-acetyllysine). His-64 is a heme b binding site. An N6-acetyllysine modification is found at Lys-83. Residue His-93 participates in heme b binding. Cys-94 carries the post-translational modification S-nitrosocysteine. Position 140 is a phosphoserine (Ser-140).

It belongs to the globin family. As to quaternary structure, heterotetramer of two alpha chains and two gamma chains in fetal hemoglobin (Hb F). In terms of tissue distribution, red blood cells.

Gamma chains make up the fetal hemoglobin F, in combination with alpha chains. In Sapajus apella (Brown-capped capuchin), this protein is Hemoglobin subunit gamma-1 (HBG1).